Here is a 76-residue protein sequence, read N- to C-terminus: Small proline-rich protein 2I (76 aa).

A run of 3 repeats spans residues 21–29 (KKCPEPCPP), 30–38 (PQCPEPCPP), and 39–47 (PKCPEPCPE). The 3 X 9 AA approximate tandem repeats stretch occupies residues 21 to 47 (KKCPEPCPPPQCPEPCPPPKCPEPCPE). The segment covering 40–53 (KCPEPCPESCPPPS) has biased composition (pro residues). The segment at 40–76 (KCPEPCPESCPPPSYQQKCPPVQPPPPCQQKCPPKSK) is disordered.

It belongs to the cornifin (SPRR) family. As to expression, not expressed in uterus.

Its subcellular location is the cytoplasm. In terms of biological role, cross-linked envelope protein of keratinocytes. It is a keratinocyte protein that first appears in the cell cytosol, but ultimately becomes cross-linked to membrane proteins by transglutaminase. All that results in the formation of an insoluble envelope beneath the plasma membrane. The protein is Small proline-rich protein 2I (Sprr2i) of Mus musculus (Mouse).